The following is a 120-amino-acid chain: Small ribosomal subunit protein uS13m (120 aa).

The protein belongs to the universal ribosomal protein uS13 family. In terms of assembly, part of the small ribosomal subunit.

It localises to the mitochondrion. Located at the top of the head of the small subunit, it contacts several helices of the 18S rRNA. This is Small ribosomal subunit protein uS13m (RPS13) from Marchantia polymorpha (Common liverwort).